The primary structure comprises 248 residues: Pyridoxine 5'-phosphate synthase (248 aa).

Residues Asn8 and Arg19 each coordinate 3-amino-2-oxopropyl phosphate. Catalysis depends on His44, which acts as the Proton acceptor. Arg46 and His51 together coordinate 1-deoxy-D-xylulose 5-phosphate. Catalysis depends on Glu76, which acts as the Proton acceptor. Residue Thr106 participates in 1-deoxy-D-xylulose 5-phosphate binding. His200 (proton donor) is an active-site residue. Residues Asp201 and 223–224 (GH) each bind 3-amino-2-oxopropyl phosphate.

The protein belongs to the PNP synthase family. Homooctamer; tetramer of dimers.

Its subcellular location is the cytoplasm. It catalyses the reaction 3-amino-2-oxopropyl phosphate + 1-deoxy-D-xylulose 5-phosphate = pyridoxine 5'-phosphate + phosphate + 2 H2O + H(+). Its pathway is cofactor biosynthesis; pyridoxine 5'-phosphate biosynthesis; pyridoxine 5'-phosphate from D-erythrose 4-phosphate: step 5/5. Catalyzes the complicated ring closure reaction between the two acyclic compounds 1-deoxy-D-xylulose-5-phosphate (DXP) and 3-amino-2-oxopropyl phosphate (1-amino-acetone-3-phosphate or AAP) to form pyridoxine 5'-phosphate (PNP) and inorganic phosphate. The chain is Pyridoxine 5'-phosphate synthase from Chelativorans sp. (strain BNC1).